The primary structure comprises 692 residues: Elongation factor G (692 aa).

The 275-residue stretch at 8–282 (AKTRNIGIMA…AVIAYLPSPL (275 aa)) folds into the tr-type G domain. GTP is bound by residues 17–24 (AHVDAGKT), 81–85 (DTPGH), and 135–138 (NKMD).

This sequence belongs to the TRAFAC class translation factor GTPase superfamily. Classic translation factor GTPase family. EF-G/EF-2 subfamily.

The protein resides in the cytoplasm. Its function is as follows. Catalyzes the GTP-dependent ribosomal translocation step during translation elongation. During this step, the ribosome changes from the pre-translocational (PRE) to the post-translocational (POST) state as the newly formed A-site-bound peptidyl-tRNA and P-site-bound deacylated tRNA move to the P and E sites, respectively. Catalyzes the coordinated movement of the two tRNA molecules, the mRNA and conformational changes in the ribosome. The polypeptide is Elongation factor G (Streptococcus pyogenes serotype M49 (strain NZ131)).